The chain runs to 445 residues: MEKIKVALVSLGCDKNRIDSELMLYKLNEEAELVKNPKEAQVIIVNTCGFIETAKEESINTILQMASYKKTHNCKVLVVTGCLTQRYKGELKELIPEMDIMLGVNDYDKLLESIKVFLKSGEKSFYHKYSDTKINEGNRILTTPTYTAYVRIAEGCNNFCTYCAIPRIRGKYRSRKKENILKEVENLAKQGVKEIILIAQDTTMYGIDIYGKKVLHELLRDISKVEGVKWIRLLYCYPEEITKELIEEIKNNDKVCKYLDLPIQQISNSVLKRMGRKTTKETIIDIIKKLRKEIEGITLRTSLIVGFPGETEGEFSELKEFVSDVKLDKLGVFKYSKEEGTSAALMEEQIDEEIKEKREEEIMILQQSISKDINKEKIGKIYEVIVEGTKEDMYYGRNYEMSPEIDGEIYFEKDENVKIGDIIKVKVTHSLEYDLIGVVYNELSK.

In terms of domain architecture, MTTase N-terminal spans 4–119; that stretch reads IKVALVSLGC…LLESIKVFLK (116 aa). [4Fe-4S] cluster contacts are provided by cysteine 13, cysteine 48, cysteine 82, cysteine 156, cysteine 160, and cysteine 163. Residues 142–372 form the Radical SAM core domain; the sequence is TTPTYTAYVR…MILQQSISKD (231 aa). Residues 375–441 enclose the TRAM domain; it reads KEKIGKIYEV…EYDLIGVVYN (67 aa).

Belongs to the methylthiotransferase family. RimO subfamily. [4Fe-4S] cluster is required as a cofactor.

It localises to the cytoplasm. The enzyme catalyses L-aspartate(89)-[ribosomal protein uS12]-hydrogen + (sulfur carrier)-SH + AH2 + 2 S-adenosyl-L-methionine = 3-methylsulfanyl-L-aspartate(89)-[ribosomal protein uS12]-hydrogen + (sulfur carrier)-H + 5'-deoxyadenosine + L-methionine + A + S-adenosyl-L-homocysteine + 2 H(+). In terms of biological role, catalyzes the methylthiolation of an aspartic acid residue of ribosomal protein uS12. The polypeptide is Ribosomal protein uS12 methylthiotransferase RimO (Clostridium botulinum (strain Langeland / NCTC 10281 / Type F)).